The sequence spans 372 residues: Glutamate 5-kinase (372 aa).

Lysine 14 contributes to the ATP binding site. Positions 54, 141, and 153 each coordinate substrate. 173-174 (TD) serves as a coordination point for ATP. A PUA domain is found at 280-358 (RGHVVIDAGA…GEIETVLGYM (79 aa)).

The protein belongs to the glutamate 5-kinase family.

The protein localises to the cytoplasm. The catalysed reaction is L-glutamate + ATP = L-glutamyl 5-phosphate + ADP. Its pathway is amino-acid biosynthesis; L-proline biosynthesis; L-glutamate 5-semialdehyde from L-glutamate: step 1/2. Catalyzes the transfer of a phosphate group to glutamate to form L-glutamate 5-phosphate. The chain is Glutamate 5-kinase from Burkholderia orbicola (strain AU 1054).